We begin with the raw amino-acid sequence, 89 residues long: SAP domain-containing new25 (89 aa).

The SAP domain occupies 44-78; it reads PSQWSKKQLIEYCKKNSLKTSGSHEELVIRVQNHL.

This Schizosaccharomyces pombe (strain 972 / ATCC 24843) (Fission yeast) protein is SAP domain-containing new25 (new25).